Reading from the N-terminus, the 273-residue chain is Large ribosomal subunit protein uL2 (273 aa).

Disordered regions lie at residues 28–54 and 221–273; these read KPYAPLLEKNSKSGGRNNNGRITTRHI and RGTA…RRTK. The span at 39 to 48 shows a compositional bias: low complexity; it reads KSGGRNNNGR.

This sequence belongs to the universal ribosomal protein uL2 family. As to quaternary structure, part of the 50S ribosomal subunit. Forms a bridge to the 30S subunit in the 70S ribosome.

In terms of biological role, one of the primary rRNA binding proteins. Required for association of the 30S and 50S subunits to form the 70S ribosome, for tRNA binding and peptide bond formation. It has been suggested to have peptidyltransferase activity; this is somewhat controversial. Makes several contacts with the 16S rRNA in the 70S ribosome. The sequence is that of Large ribosomal subunit protein uL2 from Pectobacterium carotovorum subsp. carotovorum (strain PC1).